The following is a 450-amino-acid chain: E3 ubiquitin-protein ligase XB3 (450 aa).

ANK repeat units lie at residues 11–40, 46–75, 79–108, 113–142, 158–187, and 195–225; these read GDEHDFFRAAQLGDLDALAALLAADPSLAR, DRLSVLHIAAANGRIEVLSMFLDRGAPPDA, HKQTPLMLAAMHGKIDCVLKLLQADANILM, HARTCLHHAAYYGHVDCLQAILAAAQTTPV, HGATPLHLAARQGRPGCVQVLLENGAIVSA, and PGSTSLHLAARSGNLDCIRKLLAWGADRLQR. The interval 291–312 is disordered; sequence ILNGTKYSLPSPSPGDDSADDD. The RING-type zinc-finger motif lies at 323 to 372; it reads CCICFDQACTIEVQDCGHQMCAPCTLALCCHNKPNPTTLTPPSPACPFCR. The tract at residues 385–450 is disordered; it reads SACDPDKPSS…SNLDKPEHDL (66 aa).

As to quaternary structure, interacts (via ankyrin repeats) with XA21. Post-translationally, phosphorylated by XA21.

The enzyme catalyses S-ubiquitinyl-[E2 ubiquitin-conjugating enzyme]-L-cysteine + [acceptor protein]-L-lysine = [E2 ubiquitin-conjugating enzyme]-L-cysteine + N(6)-ubiquitinyl-[acceptor protein]-L-lysine.. Its pathway is protein modification; protein ubiquitination. Functionally, E3 ubiquitin-protein ligase required for full accumulation of the LRR receptor kinase XA21 and XA21-mediated disease resistance. Binding to XA21 may stabilize the receptor kinase and maintain its protein level. Autoubiquitinated in vitro. This chain is E3 ubiquitin-protein ligase XB3 (XB3), found in Oryza sativa subsp. japonica (Rice).